The following is a 334-amino-acid chain: Large ribosomal subunit protein uL3 (334 aa).

Residues methionine 1–arginine 10 show a composition bias toward basic residues. Residues methionine 1–alanine 21 form a disordered region.

It belongs to the universal ribosomal protein uL3 family. As to quaternary structure, part of the 50S ribosomal subunit. Forms a cluster with proteins L14 and L24e.

Its function is as follows. One of the primary rRNA binding proteins, it binds directly near the 3'-end of the 23S rRNA, where it nucleates assembly of the 50S subunit. This is Large ribosomal subunit protein uL3 from Methanococcus maripaludis (strain DSM 14266 / JCM 13030 / NBRC 101832 / S2 / LL).